A 514-amino-acid polypeptide reads, in one-letter code: Glutamate--cysteine ligase (514 aa).

The protein belongs to the glutamate--cysteine ligase type 1 family. Type 1 subfamily.

It carries out the reaction L-cysteine + L-glutamate + ATP = gamma-L-glutamyl-L-cysteine + ADP + phosphate + H(+). Its pathway is sulfur metabolism; glutathione biosynthesis; glutathione from L-cysteine and L-glutamate: step 1/2. This is Glutamate--cysteine ligase from Enterobacter sp. (strain 638).